A 367-amino-acid chain; its full sequence is Phosphoribosylaminoimidazole-succinocarboxamide synthase (367 aa).

The protein belongs to the SAICAR synthetase family.

It carries out the reaction 5-amino-1-(5-phospho-D-ribosyl)imidazole-4-carboxylate + L-aspartate + ATP = (2S)-2-[5-amino-1-(5-phospho-beta-D-ribosyl)imidazole-4-carboxamido]succinate + ADP + phosphate + 2 H(+). It participates in purine metabolism; IMP biosynthesis via de novo pathway; 5-amino-1-(5-phospho-D-ribosyl)imidazole-4-carboxamide from 5-amino-1-(5-phospho-D-ribosyl)imidazole-4-carboxylate: step 1/2. This is Phosphoribosylaminoimidazole-succinocarboxamide synthase from Vibrio parahaemolyticus serotype O3:K6 (strain RIMD 2210633).